Consider the following 396-residue polypeptide: Inositol polyphosphate multikinase (396 aa).

Residues 1–13 are compositionally biased toward low complexity; the sequence is MAAEPPALRLRPP. The tract at residues 1 to 22 is disordered; the sequence is MAAEPPALRLRPPGSTGDSPPV. A2 is subject to N-acetylalanine. Phosphoserine is present on S19. An ATP-binding site is contributed by K58. Substrate is bound at residue R65. ATP is bound by residues 114–116 and D127; that span reads EDV. Substrate contacts are provided by residues K129, 143-150, and Q179; that span reads KIQQQVSK. The Nuclear localization signal signature appears at 300-310; that stretch reads RHRKLYAKKHQ. D365 lines the ATP pocket.

Belongs to the inositol phosphokinase (IPK) family. Requires Mg(2+) as cofactor. As to expression, highly expressed in kidney, and at lower levels in hippocampus, brain cortex, cerebellum, heart and lung.

Its subcellular location is the nucleus. It catalyses the reaction 1D-myo-inositol 1,4,5-trisphosphate + 2 ATP = 1D-myo-inositol 1,3,4,5,6-pentakisphosphate + 2 ADP + 2 H(+). It carries out the reaction 1D-myo-inositol 1,3,4,6-tetrakisphosphate + ATP = 1D-myo-inositol 1,3,4,5,6-pentakisphosphate + ADP + H(+). The enzyme catalyses 1-octadecanoyl-2-(5Z,8Z,11Z,14Z)-eicosatetraenoyl-sn-glycero-3-phospho-1D-myo-inositol 4,5-bisphosphate + ATP = 1-octadecanoyl-2-(5Z,8Z,11Z,14Z-eicosatetraenoyl)-sn-glycero-3-phospho-(1D-myo-inositol 3,4,5-triphosphate) + ADP + H(+). The catalysed reaction is a 1,2-diacyl-sn-glycero-3-phospho-(1D-myo-inositol-4,5-bisphosphate) + ATP = a 1,2-diacyl-sn-glycero-3-phospho-(1D-myo-inositol-3,4,5-trisphosphate) + ADP + H(+). It catalyses the reaction 1D-myo-inositol 1,4,5,6-tetrakisphosphate + ATP = 1D-myo-inositol 1,3,4,5,6-pentakisphosphate + ADP + H(+). The protein operates within phospholipid metabolism; phosphatidylinositol metabolism. Its function is as follows. Inositol phosphate kinase with a broad substrate specificity. Phosphorylates inositol 1,4,5-trisphosphate (Ins(1,4,5)P3) first to inositol 1,3,4,5-tetrakisphosphate and then to inositol 1,3,4,5,6-pentakisphosphate (Ins(1,3,4,5,6)P5). Phosphorylates inositol 1,3,4,6-tetrakisphosphate (Ins(1,3,4,6)P4). Phosphorylates inositol 1,4,5,6-tetrakisphosphate (Ins(1,4,5,6)P4). Phosphorylates glycero-3-phospho-1D-myo-inositol 4,5-bisphosphate to glycero-3-phospho-1D-myo-inositol 3,4,5-trisphosphate. Plays an important role in MLKL-mediated necroptosis via its role in the biosynthesis of inositol pentakisphosphate (InsP5) and inositol hexakisphosphate (InsP6). Binding of these highly phosphorylated inositol phosphates to MLKL mediates the release of an N-terminal auto-inhibitory region, leading to activation of the kinase. Essential for activated phospho-MLKL to oligomerize and localize to the cell membrane during necroptosis. Required for normal embryonic development, probably via its role in the biosynthesis of inositol 1,3,4,5,6-pentakisphosphate (Ins(1,3,4,5,6)P5) and inositol hexakisphosphate (InsP6). In Rattus norvegicus (Rat), this protein is Inositol polyphosphate multikinase (Ipmk).